We begin with the raw amino-acid sequence, 403 residues long: Nuclear receptor subfamily 2 group F member 5 (403 aa).

A disordered region spans residues 16 to 44; the sequence is PGSQLQMCSQEPGGTPGTPSGSTPGNDAL. Positions 51-126 form a DNA-binding region, nuclear receptor; the sequence is NVDCMVCGDK…VGMRREAVQR (76 aa). 2 NR C4-type zinc fingers span residues 54–74 and 90–114; these read CMVCGDKSSGKHYGQFTCEGC and CRGNRDCPIDQHHRNQCQYCRLKKC. Residues 152 to 378 form the NR LBD domain; the sequence is YLSGFISLLL…TLLRDMLLSG (227 aa).

The protein belongs to the nuclear hormone receptor family. NR2 subfamily.

The protein localises to the nucleus. Functionally, putative receptor that is required in photoreceptor cells precursors during eye development. This Danio rerio (Zebrafish) protein is Nuclear receptor subfamily 2 group F member 5 (nr2f5).